The following is a 169-amino-acid chain: Short form salivary protein D7R3 (169 aa).

An N-terminal signal peptide occupies residues 1–21 (MFGKLLPCAILVWCLFSLGQA). 3 cysteine pairs are disulfide-bonded: Cys30-Cys62, Cys43-Cys168, and Cys101-Cys120. Noradrenaline-binding residues include Glu31 and Arg46. Serotonin is bound at residue Glu31. His59, Tyr118, Asp135, and Glu138 together coordinate serotonin. The histamine site is built by Tyr118, Asp135, and Glu138. Positions 135 and 138 each coordinate noradrenaline.

This sequence belongs to the PBP/GOBP family. Female saliva (at protein level). Female salivary gland. Low-level expression in female carcass without salivary glands. Not detected in male tissues.

The protein localises to the secreted. Its function is as follows. Modulates blood feeding of female mosquitoes on vertebrate species by binding and sequestering different mediators involved in the host response. Binds serotonin, noradrenaline, histamine and adrenaline. Inhibits histamine-, serotonin- and noradrenaline-induced smooth muscle contraction. Exhibits vasodilating activity. This Anopheles gambiae (African malaria mosquito) protein is Short form salivary protein D7R3.